Consider the following 220-residue polypeptide: Chaperone protein TorD (220 aa).

This sequence belongs to the TorD/DmsD family. TorD subfamily.

It is found in the cytoplasm. Its function is as follows. Involved in the biogenesis of TorA. Acts on TorA before the insertion of the molybdenum cofactor and, as a result, probably favors a conformation of the apoenzyme that is competent for acquiring the cofactor. The polypeptide is Chaperone protein TorD (Vibrio cholerae serotype O1 (strain ATCC 39315 / El Tor Inaba N16961)).